A 1187-amino-acid chain; its full sequence is Tyrosine-protein phosphatase non-receptor type 14 (1187 aa).

In terms of domain architecture, FERM spans 21–306 (FVTRIRLLDS…TRHKFYKQNK (286 aa)). Phosphoserine is present on residues S314, S461, and S486. Polar residues predominate over residues 510–524 (LVSPSDQRNPKNNVV). Residues 510 to 531 (LVSPSDQRNPKNNVVPSKPGAS) are disordered. Phosphoserine occurs at positions 591, 593, 594, and 642. 2 disordered regions span residues 671–690 (LREQ…PQLP) and 787–824 (KAIS…KKEP). Residues 815-824 (SVKERVKKEP) are compositionally biased toward basic and acidic residues. Phosphoserine is present on S831. Residues 909 to 1180 (VFTEYEQIPK…KFVYQVLIQF (272 aa)) enclose the Tyrosine-protein phosphatase domain. Residues D1079, 1121-1127 (CSAGVGR), and Q1165 each bind substrate. Residue C1121 is the Phosphocysteine intermediate of the active site.

It belongs to the protein-tyrosine phosphatase family. Non-receptor class subfamily. Interacts with FLT4; the interaction is enhanced by stimulation with VEGFC. Interacts (via PPxY motifs) with YAP1 (via WW domains); this interaction leads to the cytoplasmic sequestration of YAP1 and inhibits its transcriptional co-activator activity. Ubiquitinated by the ECS (Elongin BC-CUL2/5-SOCS-box protein)/LRR1 E3 ligase complex and subsequently targeted to proteasomal degradation. As to expression, ubiquitous.

It is found in the cytoplasm. The protein resides in the cytoskeleton. The protein localises to the nucleus. It carries out the reaction O-phospho-L-tyrosyl-[protein] + H2O = L-tyrosyl-[protein] + phosphate. Its function is as follows. Protein tyrosine phosphatase which may play a role in the regulation of lymphangiogenesis, cell-cell adhesion, cell-matrix adhesion, cell migration, cell growth and also regulates TGF-beta gene expression, thereby modulating epithelial-mesenchymal transition. Mediates beta-catenin dephosphorylation at adhesion junctions. Acts as a negative regulator of the oncogenic property of YAP, a downstream target of the hippo pathway, in a cell density-dependent manner. May function as a tumor suppressor. In Homo sapiens (Human), this protein is Tyrosine-protein phosphatase non-receptor type 14 (PTPN14).